We begin with the raw amino-acid sequence, 759 residues long: uncharacterized protein (759 aa).

Positions 352 to 556 (VIQKLSDYAF…KDEDIADFSI (205 aa)) constitute an MCM domain. 397 to 404 (SDPGVGKS) lines the ATP pocket.

It belongs to the MCM family.

This is an uncharacterized protein from Methanocaldococcus jannaschii (strain ATCC 43067 / DSM 2661 / JAL-1 / JCM 10045 / NBRC 100440) (Methanococcus jannaschii).